A 266-amino-acid chain; its full sequence is Interleukin-1 beta (266 aa).

The propeptide occupies 1–114; it reads MAAVPELSSE…DTWDEEYESD (114 aa).

The protein belongs to the IL-1 family. Monomer. In its precursor form, weakly interacts with full-length MEFV; the mature cytokine does not interact at all. Interacts with integrins ITGAV:ITGBV and ITGA5:ITGB1; integrin-binding is required for IL1B signaling. Interacts with cargo receptor TMED10; the interaction is direct and is required for the secretion of IL1B mature form. Interacts with HSP90AB1; the interaction facilitates cargo translocation into the ERGIC. Interacts with HSP90B1; the interaction facilitates cargo translocation into the ERGIC.

Its subcellular location is the cytoplasm. It is found in the cytosol. The protein resides in the secreted. The protein localises to the lysosome. It localises to the extracellular exosome. Potent pro-inflammatory cytokine. Initially discovered as the major endogenous pyrogen, induces prostaglandin synthesis, neutrophil influx and activation, T-cell activation and cytokine production, B-cell activation and antibody production, and fibroblast proliferation and collagen production. Promotes Th17 differentiation of T-cells. Synergizes with IL12/interleukin-12 to induce IFNG synthesis from T-helper 1 (Th1) cells. Plays a role in angiogenesis by inducing VEGF production synergistically with TNF and IL6. Involved in transduction of inflammation downstream of pyroptosis: its mature form is specifically released in the extracellular milieu by passing through the gasdermin-D (GSDMD) pore. The sequence is that of Interleukin-1 beta (IL1B) from Cavia porcellus (Guinea pig).